Here is a 394-residue protein sequence, read N- to C-terminus: 1-deoxy-D-xylulose 5-phosphate reductoisomerase (394 aa).

NADPH is bound by residues Thr10, Gly11, Ser12, Ile13, Gly38, Arg39, Asn40, and Asn123. Lys124 contacts 1-deoxy-D-xylulose 5-phosphate. Glu125 is a binding site for NADPH. Position 149 (Asp149) interacts with Mn(2+). 4 residues coordinate 1-deoxy-D-xylulose 5-phosphate: Ser150, Glu151, Ser175, and His198. Glu151 is a Mn(2+) binding site. Gly204 is an NADPH binding site. Residues Ser211, Asn216, Lys217, and Glu220 each coordinate 1-deoxy-D-xylulose 5-phosphate. A Mn(2+)-binding site is contributed by Glu220.

The protein belongs to the DXR family. Requires Mg(2+) as cofactor. It depends on Mn(2+) as a cofactor.

The catalysed reaction is 2-C-methyl-D-erythritol 4-phosphate + NADP(+) = 1-deoxy-D-xylulose 5-phosphate + NADPH + H(+). Its pathway is isoprenoid biosynthesis; isopentenyl diphosphate biosynthesis via DXP pathway; isopentenyl diphosphate from 1-deoxy-D-xylulose 5-phosphate: step 1/6. Its function is as follows. Catalyzes the NADPH-dependent rearrangement and reduction of 1-deoxy-D-xylulose-5-phosphate (DXP) to 2-C-methyl-D-erythritol 4-phosphate (MEP). In Cereibacter sphaeroides (strain KD131 / KCTC 12085) (Rhodobacter sphaeroides), this protein is 1-deoxy-D-xylulose 5-phosphate reductoisomerase.